The primary structure comprises 180 residues: MQNPQNLIWIDLEMTGLNPDTDVIIEMATIVTDSNLNTLAEGPVIAIHQSDEILAGMDEWNTRQHGGSGLTQRVRESRISMAEAEAQTIAFLEQWVPKGKSPICGNSICQDRRFLYRHMKALESYFHYRNLDVSTLKELAARWAPDVRDSFKKGSTHLALDDIRESIAELQHYRKHFIKF.

The 164-residue stretch at 7–170 folds into the Exonuclease domain; it reads LIWIDLEMTG…DDIRESIAEL (164 aa). Residue tyrosine 128 is part of the active site.

The protein belongs to the oligoribonuclease family.

It localises to the cytoplasm. 3'-to-5' exoribonuclease specific for small oligoribonucleotides. In Pseudomonas fluorescens (strain ATCC BAA-477 / NRRL B-23932 / Pf-5), this protein is Oligoribonuclease.